A 163-amino-acid polypeptide reads, in one-letter code: uncharacterized protein (163 aa).

A disordered region spans residues 144–163 (WSHSQSQLGTPGRGKGALGF). Over residues 154 to 163 (PGRGKGALGF) the composition is skewed to gly residues.

This is an uncharacterized protein from Homo sapiens (Human).